The chain runs to 219 residues: uncharacterized protein (219 aa).

Residues 42–71 form a disordered region; that stretch reads RQPRVVPVTSSDPEVVDDEDDEDQSDDSDE. The span at 45-54 shows a compositional bias: low complexity; sequence RVVPVTSSDP. Acidic residues predominate over residues 55–71; sequence EVVDDEDDEDQSDDSDE.

This is an uncharacterized protein from Dryophytes versicolor (chameleon treefrog).